Reading from the N-terminus, the 303-residue chain is ASC1-like protein (303 aa).

Transmembrane regions (helical) follow at residues 19-39, 81-101, 127-147, 153-173, 212-232, and 255-275; these read YEDF…RFLL, CIYF…EPWF, ALYM…IFWE, FGVS…SYNI, YLCL…VLWS, and YIFN…WVLI. Residues 72-284 enclose the TLC domain; sequence RKFKESAWKC…IYRMLVKQIQ (213 aa).

It localises to the endoplasmic reticulum membrane. Its function is as follows. Mediates resistance to sphinganine-analog mycotoxins (SAMs) by restoring the sphingolipid biosynthesis. Could salvage the transport of GPI-anchored proteins from the endoplasmic reticulum to the Golgi apparatus in ceramides-depleted cells after SAM exposure. The protein is ASC1-like protein of Solanum lycopersicum (Tomato).